We begin with the raw amino-acid sequence, 192 residues long: Adenylate kinase (192 aa).

12–17 (GSGKTT) contributes to the ATP binding site. The tract at residues 34–63 (STGDLLRAEVASGSELGKTIDSFISKGNLV) is NMP. Residues Thr-35, Arg-40, 61 to 63 (NLV), 88 to 91 (GYPR), and Gln-95 each bind AMP. The interval 130-136 (GRNRGAD) is LID. Arg-131 serves as a coordination point for ATP. Residues Arg-133 and Arg-145 each coordinate AMP. Arg-173 contributes to the ATP binding site.

Belongs to the adenylate kinase family. Monomer.

Its subcellular location is the cytoplasm. The catalysed reaction is AMP + ATP = 2 ADP. Its pathway is purine metabolism; AMP biosynthesis via salvage pathway; AMP from ADP: step 1/1. In terms of biological role, catalyzes the reversible transfer of the terminal phosphate group between ATP and AMP. Plays an important role in cellular energy homeostasis and in adenine nucleotide metabolism. This is Adenylate kinase from Campylobacter jejuni subsp. jejuni serotype O:6 (strain 81116 / NCTC 11828).